Here is an 84-residue protein sequence, read N- to C-terminus: Small ribosomal subunit protein eS27 (84 aa).

The C4-type zinc finger occupies 38–60 (CPKCGATTTTFSHAHRQILCQKC).

This sequence belongs to the eukaryotic ribosomal protein eS27 family. Component of the small ribosomal subunit. Zn(2+) is required as a cofactor.

The protein resides in the cytoplasm. Component of the small ribosomal subunit. The ribosome is a large ribonucleoprotein complex responsible for the synthesis of proteins in the cell. Required for proper rRNA processing and maturation of 18S rRNAs. The protein is Small ribosomal subunit protein eS27 (RPS27) of Entamoeba histolytica (strain ATCC 30459 / HM-1:IMSS / ABRM).